We begin with the raw amino-acid sequence, 1727 residues long: Nucleoporin alm1 (1727 aa).

Coiled-coil stretches lie at residues 57–361, 443–463, 542–740, 804–1106, 1223–1427, 1497–1555, and 1601–1664; these read QEVN…KNTS, NFLS…QAEL, IKEA…AEEL, AARK…INES, GERS…QLNK, NEEE…AESA, and QKEW…KKDS. Residues 1423–1448 are compositionally biased toward polar residues; it reads EQLNKPSATPTATTQSEPSTVSLEEF. 3 disordered regions span residues 1423–1459, 1477–1500, and 1656–1727; these read EQLN…SSTQ, EKVR…NEEE, and LEQS…KKAK. 2 stretches are compositionally biased toward polar residues: residues 1672–1684 and 1702–1714; these read ASKN…SNSE and VDTN…SSSD. The residue at position 1706 (Ser-1706) is a Phosphoserine.

The protein resides in the nucleus. The protein localises to the nuclear pore complex. Its subcellular location is the nucleus envelope. In terms of biological role, maintains the proteasome and its anchor cut8 at the nucleus envelope and is required for kinetochore component proteostasis. Proper kinetochore stoichiometry ensures the correct attachment of kinetochores to spindle microtubules during cytokinesis. Required for the localization of spindle assembly checkpoint (SAC) protein mad2 and bub1 to the nucleus envelope during interphase, but not their localization during mitosis. This chain is Nucleoporin alm1, found in Schizosaccharomyces pombe (strain 972 / ATCC 24843) (Fission yeast).